The primary structure comprises 757 residues: Xaa-Pro dipeptidyl-peptidase (757 aa).

Catalysis depends on charge relay system residues Ser-348, Asp-468, and His-498.

This sequence belongs to the peptidase S15 family. As to quaternary structure, homodimer.

The protein localises to the cytoplasm. The enzyme catalyses Hydrolyzes Xaa-Pro-|- bonds to release unblocked, N-terminal dipeptides from substrates including Ala-Pro-|-p-nitroanilide and (sequentially) Tyr-Pro-|-Phe-Pro-|-Gly-Pro-|-Ile.. Removes N-terminal dipeptides sequentially from polypeptides having unsubstituted N-termini provided that the penultimate residue is proline. This is Xaa-Pro dipeptidyl-peptidase from Streptococcus pneumoniae (strain ATCC 700669 / Spain 23F-1).